Here is a 175-residue protein sequence, read N- to C-terminus: MKELKYYEKVALSNFDILEMLDNKAEIVLYPNLIKYETIDDVLGPYGACVLLFEAKKNYGHWCCLFKREDNSIEFFNSYGGYPDNSLKYIPLHYREISNQYYPYLSLLLLKYPHKLYYNEFKFQKRANDIRTCGRWCVLRLLLKHLDIYEFKKYVDDMCSYYKVTPDELVTMITI.

This is an uncharacterized protein from Acanthamoeba polyphaga (Amoeba).